The sequence spans 473 residues: Bifunctional protein HldE (473 aa).

The interval 1–318 (MKLSMPRFDQ…RAIQREEGSE (318 aa)) is ribokinase. 194–197 (NLSE) is an ATP binding site. Residue D263 is part of the active site. Positions 343–473 (FTNGCFDILH…TAIVEKIRKN (131 aa)) are cytidylyltransferase.

It in the N-terminal section; belongs to the carbohydrate kinase PfkB family. This sequence in the C-terminal section; belongs to the cytidylyltransferase family. As to quaternary structure, homodimer.

The catalysed reaction is D-glycero-beta-D-manno-heptose 7-phosphate + ATP = D-glycero-beta-D-manno-heptose 1,7-bisphosphate + ADP + H(+). It carries out the reaction D-glycero-beta-D-manno-heptose 1-phosphate + ATP + H(+) = ADP-D-glycero-beta-D-manno-heptose + diphosphate. It functions in the pathway nucleotide-sugar biosynthesis; ADP-L-glycero-beta-D-manno-heptose biosynthesis; ADP-L-glycero-beta-D-manno-heptose from D-glycero-beta-D-manno-heptose 7-phosphate: step 1/4. It participates in nucleotide-sugar biosynthesis; ADP-L-glycero-beta-D-manno-heptose biosynthesis; ADP-L-glycero-beta-D-manno-heptose from D-glycero-beta-D-manno-heptose 7-phosphate: step 3/4. Its function is as follows. Catalyzes the phosphorylation of D-glycero-D-manno-heptose 7-phosphate at the C-1 position to selectively form D-glycero-beta-D-manno-heptose-1,7-bisphosphate. Functionally, catalyzes the ADP transfer from ATP to D-glycero-beta-D-manno-heptose 1-phosphate, yielding ADP-D-glycero-beta-D-manno-heptose. This chain is Bifunctional protein HldE, found in Pseudomonas putida (strain ATCC 47054 / DSM 6125 / CFBP 8728 / NCIMB 11950 / KT2440).